The primary structure comprises 177 residues: MSRVAKNPVKLPSGVEVKLVGQLLSVKGAKGTLELNIHSSVEVVVEAGELRFVARNGDQQTRAMAGTTRALVNNMVQGVSQGFERKLQLVGVGYKAQAKGTVLNLALGFSHPVDYELPNGITAETPSQTDILIRGIDKQLVGQVAAEIRDFRRPEPYKGKGVRYADEVVRRKEAKKK.

The protein belongs to the universal ribosomal protein uL6 family. In terms of assembly, part of the 50S ribosomal subunit.

Its function is as follows. This protein binds to the 23S rRNA, and is important in its secondary structure. It is located near the subunit interface in the base of the L7/L12 stalk, and near the tRNA binding site of the peptidyltransferase center. This Pseudomonas syringae pv. syringae (strain B728a) protein is Large ribosomal subunit protein uL6.